The chain runs to 147 residues: Ubiquitin-conjugating enzyme E2 2 (147 aa).

Residues 1–147 (MALKRIQKEL…AREWTQKYAM (147 aa)) enclose the UBC core domain. Cys-85 functions as the Glycyl thioester intermediate in the catalytic mechanism.

The protein belongs to the ubiquitin-conjugating enzyme family. Interacts with the brc-1-brd-1 heterodimer following ionizing irradiation. In terms of tissue distribution, expressed in the nervous system.

It localises to the nucleus. The protein localises to the chromosome. It is found in the cytoplasm. It catalyses the reaction S-ubiquitinyl-[E1 ubiquitin-activating enzyme]-L-cysteine + [E2 ubiquitin-conjugating enzyme]-L-cysteine = [E1 ubiquitin-activating enzyme]-L-cysteine + S-ubiquitinyl-[E2 ubiquitin-conjugating enzyme]-L-cysteine.. It participates in protein modification; protein ubiquitination. Functionally, catalyzes the covalent attachment of ubiquitin to other proteins. Mediates the selective degradation of short-lived and abnormal proteins. Plays a role in the DNA damage response. In particular, in response to ionizing radiation, associates with the E3 ubiquitin-protein ligase brc-1-brd-1 heterodimer on chromatin to activate E3-ubiquitin ligase activity of the heterodimer, and thus its DNA damage repair mechanisms. Required, cell autonomously, for death of the linker cell, a male-specific cell which guides the elongation of the gonad; perhaps acting as part of the ubiquitin proteasome system (UPS) and modulated by heat shock transcription factor hsf-1. This chain is Ubiquitin-conjugating enzyme E2 2, found in Caenorhabditis elegans.